We begin with the raw amino-acid sequence, 426 residues long: Adenylosuccinate synthetase (426 aa).

GTP-binding positions include 12–18 (GDEGKGK) and 40–42 (GHT). The active-site Proton acceptor is the aspartate 13. Mg(2+) contacts are provided by aspartate 13 and glycine 40. IMP-binding positions include 13–16 (DEGK), 38–41 (NAGH), threonine 128, arginine 142, glutamine 223, threonine 238, and arginine 302. The active-site Proton donor is the histidine 41. Substrate is bound at residue 298–304 (TTTGRAR). GTP contacts are provided by residues arginine 304, 330–332 (KLD), and 412–414 (SVG).

It belongs to the adenylosuccinate synthetase family. In terms of assembly, homodimer. Mg(2+) serves as cofactor.

It is found in the cytoplasm. It carries out the reaction IMP + L-aspartate + GTP = N(6)-(1,2-dicarboxyethyl)-AMP + GDP + phosphate + 2 H(+). It functions in the pathway purine metabolism; AMP biosynthesis via de novo pathway; AMP from IMP: step 1/2. Its function is as follows. Plays an important role in the de novo pathway of purine nucleotide biosynthesis. Catalyzes the first committed step in the biosynthesis of AMP from IMP. In Thermoanaerobacter pseudethanolicus (strain ATCC 33223 / 39E) (Clostridium thermohydrosulfuricum), this protein is Adenylosuccinate synthetase.